A 231-amino-acid polypeptide reads, in one-letter code: uncharacterized protein (231 aa).

It belongs to the DnaA family. HdA subfamily.

This is an uncharacterized protein from Haemophilus influenzae (strain ATCC 51907 / DSM 11121 / KW20 / Rd).